The primary structure comprises 66 residues: Large ribosomal subunit protein bL35 (66 aa).

Basic residues-rich tracts occupy residues 1 to 16 and 23 to 45; these read MPKFKTHRASAKRFKK and KRGHAYTSHRFHGKTKKQRRQLR. Residues 1 to 66 are disordered; sequence MPKFKTHRAS…RIRQMLSQMK (66 aa).

The protein belongs to the bacterial ribosomal protein bL35 family.

In Lacticaseibacillus casei (strain BL23) (Lactobacillus casei), this protein is Large ribosomal subunit protein bL35.